The primary structure comprises 288 residues: Prohibitin-2 (288 aa).

The chain crosses the membrane as a helical; Signal-anchor for type II membrane protein span at residues 21–43 (GKYAFTGTGLLLALGLAGFAVQT). Positions 125–128 (YRTL) match the AIM motif.

It belongs to the prohibitin family. As to quaternary structure, the mitochondrial prohibitin complex consists of two subunits (phb1 and phb2). The subunits assemble into a membrane-associated ring-shaped supercomplex of approximately 1 mDa.

It is found in the mitochondrion inner membrane. Its function is as follows. Prohibitin probably acts as a holdase/unfoldase for the stabilization of newly synthesized mitochondrial proteins. Involved in mitophagy; may act as an adapter for atg8 that supports mitophagosome assembly. Negatively regulates the proteolytic processing of atg32 via the i-AAA protease. Acts as a negative regulator of the m-AAA protease. The protein is Prohibitin-2 (phb2) of Schizosaccharomyces pombe (strain 972 / ATCC 24843) (Fission yeast).